The primary structure comprises 195 residues: Probable nicotinate-nucleotide adenylyltransferase (195 aa).

This sequence belongs to the NadD family.

It carries out the reaction nicotinate beta-D-ribonucleotide + ATP + H(+) = deamido-NAD(+) + diphosphate. It functions in the pathway cofactor biosynthesis; NAD(+) biosynthesis; deamido-NAD(+) from nicotinate D-ribonucleotide: step 1/1. Catalyzes the reversible adenylation of nicotinate mononucleotide (NaMN) to nicotinic acid adenine dinucleotide (NaAD). The polypeptide is Probable nicotinate-nucleotide adenylyltransferase (Dictyoglomus thermophilum (strain ATCC 35947 / DSM 3960 / H-6-12)).